The chain runs to 850 residues: MAMISFSFPSPAKLPIKSQPSVSNRINVADRLILRHLNAGDLRGAVSALDLMARDGIRPMDSVTFSSLLKSCIRARDFRLGKLVHARLIEFDIEPDSVLYNSLISLYSKSGDSAKAEDVFETMRRFGKRDVVSWSAMMACYGNNGRELDAIKVFVEFLELGLVPNDYCYTAVIRACSNSDFVGVGRVTLGFLMKTGHFESDVCVGCSLIDMFVKGENSFENAYKVFDKMSELNVVTWTLMITRCMQMGFPREAIRFFLDMVLSGFESDKFTLSSVFSACAELENLSLGKQLHSWAIRSGLVDDVECSLVDMYAKCSADGSVDDCRKVFDRMEDHSVMSWTALITGYMKNCNLATEAINLFSEMITQGHVEPNHFTFSSAFKACGNLSDPRVGKQVLGQAFKRGLASNSSVANSVISMFVKSDRMEDAQRAFESLSEKNLVSYNTFLDGTCRNLNFEQAFKLLSEITERELGVSAFTFASLLSGVANVGSIRKGEQIHSQVVKLGLSCNQPVCNALISMYSKCGSIDTASRVFNFMENRNVISWTSMITGFAKHGFAIRVLETFNQMIEEGVKPNEVTYVAILSACSHVGLVSEGWRHFNSMYEDHKIKPKMEHYACMVDLLCRAGLLTDAFEFINTMPFQADVLVWRTFLGACRVHSNTELGKLAARKILELDPNEPAAYIQLSNIYACAGKWEESTEMRRKMKERNLVKEGGCSWIEVGDKIHKFYVGDTAHPNAHQIYDELDRLITEIKRCGYVPDTDLVLHKLEEENDEAEKERLLYQHSEKIAVAFGLISTSKSRPVRVFKNLRVCGDCHNAMKYISTVSGREIVLRDLNRFHHFKDGKCSCNDYW.

Residues 1 to 50 (MAMISFSFPSPAKLPIKSQPSVSNRINVADRLILRHLNAGDLRGAVSALD) constitute a chloroplast transit peptide. PPR repeat units follow at residues 61–95 (DSVTFSSLLKSCIRARDFRLGKLVHARLIEFDIEP), 96–130 (DSVLYNSLISLYSKSGDSAKAEDVFETMRRFGKRD), 131–164 (VVSWSAMMACYGNNGRELDAIKVFVEFLELGLVP), 165–199 (NDYCYTAVIRACSNSDFVGVGRVTLGFLMKTGHFE), 201–232 (DVCVGCSLIDMFVKGENSFENAYKVFDKMSEL), 233–267 (NVVTWTLMITRCMQMGFPREAIRFFLDMVLSGFES), 268–302 (DKFTLSSVFSACAELENLSLGKQLHSWAIRSGLVD), 303–334 (DVECSLVDMYAKCSADGSVDDCRKVFDRMEDH), 335–370 (SVMSWTALITGYMKNCNLATEAINLFSEMITQGHVE), 372–406 (NHFTFSSAFKACGNLSDPRVGKQVLGQAFKRGLAS), 407–437 (NSSVANSVISMFVKSDRMEDAQRAFESLSEK), 438–472 (NLVSYNTFLDGTCRNLNFEQAFKLLSEITERELGV), 473–507 (SAFTFASLLSGVANVGSIRKGEQIHSQVVKLGLSC), 508–538 (NQPVCNALISMYSKCGSIDTASRVFNFMENR), 539–573 (NVISWTSMITGFAKHGFAIRVLETFNQMIEEGVKP), 574–609 (NEVTYVAILSACSHVGLVSEGWRHFNSMYEDHKIKP), and 610–640 (KMEHYACMVDLLCRAGLLTDAFEFINTMPFQ). The segment at 645-720 (VWRTFLGACR…EGGCSWIEVG (76 aa)) is type E motif. Positions 721–751 (DKIHKFYVGDTAHPNAHQIYDELDRLITEIK) are type E(+) motif. Residues 752 to 850 (RCGYVPDTDL…DGKCSCNDYW (99 aa)) form a type DYW motif region.

It belongs to the PPR family. PCMP-H subfamily.

Its subcellular location is the plastid. The protein resides in the chloroplast. In terms of biological role, may play a role in embryogenesis. This is Pentatricopeptide repeat-containing protein At3g49170, chloroplastic (EMB2261) from Arabidopsis thaliana (Mouse-ear cress).